A 326-amino-acid polypeptide reads, in one-letter code: Beta-1,3-galactosyltransferase 1 (326 aa).

At 1–6 (MASKVS) the chain is on the cytoplasmic side. Residues 7 to 26 (CLYVLTVVCWASALWYLSIT) form a helical; Signal-anchor for type II membrane protein membrane-spanning segment. At 27–326 (RPTSSYTGSK…DMSSKKHLRC (300 aa)) the chain is on the lumenal side. N-linked (GlcNAc...) asparagine glycosylation is found at N47 and N151.

The protein belongs to the glycosyltransferase 31 family. The cofactor is Mn(2+).

The protein localises to the golgi apparatus membrane. It carries out the reaction an N-acetyl-beta-D-glucosaminyl derivative + UDP-alpha-D-galactose = a beta-D-galactosyl-(1-&gt;3)-N-acetyl-beta-D-glucosaminyl derivative + UDP + H(+). It catalyses the reaction a beta-D-GlcNAc-(1-&gt;3)-beta-D-Gal-(1-&gt;4)-beta-D-Glc-(1&lt;-&gt;1)-Cer(d18:1(4E)) + UDP-alpha-D-galactose = a beta-D-Gal-(1-&gt;3)-beta-D-GlcNAc-(1-&gt;3)-beta-D-Gal-(1-&gt;4)-beta-D-Glc-(1&lt;-&gt;1')-Cer(d18:1(4E)) + UDP + H(+). It participates in protein modification; protein glycosylation. Its function is as follows. Beta-1,3-galactosyltransferase that transfers galactose from UDP-galactose to substrates with a terminal beta-N-acetylglucosamine (beta-GlcNAc) residue. Involved in the biosynthesis of the carbohydrate moieties of glycolipids and glycoproteins. This is Beta-1,3-galactosyltransferase 1 (B3GALT1) from Gorilla gorilla gorilla (Western lowland gorilla).